Reading from the N-terminus, the 656-residue chain is UvrABC system protein C (656 aa).

One can recognise a GIY-YIG domain in the interval 16 to 95 (TDPGVYRFRD…IKEYSPRFNV (80 aa)). The UVR domain occupies 208–243 (GRFLRQLEAEMKQAAAAQEYERAARIRDDIQALRTV).

It belongs to the UvrC family. In terms of assembly, interacts with UvrB in an incision complex.

The protein localises to the cytoplasm. In terms of biological role, the UvrABC repair system catalyzes the recognition and processing of DNA lesions. UvrC both incises the 5' and 3' sides of the lesion. The N-terminal half is responsible for the 3' incision and the C-terminal half is responsible for the 5' incision. The protein is UvrABC system protein C of Thermobifida fusca (strain YX).